The primary structure comprises 452 residues: MFRRNTLTPGKGRNSLDMFSVNDFMTWIDGMKKTSDENGCSPFTLKPIKSTSDRKRRRHSRMSIVNVWNQSPTSYRDQLLHFNHESDVSIDDTSEVAGEETFGQIERFEYLLSSDGDGDGDVEIENPEVDDYQVSEHDFGLEDDFNGDGCQQMIEIESDEAISEEEEDLSNENKSESQLGESFSFNQDNTFVNYASPASITEEFVEPKDSQFNHDVNLMQGSAPGYSTVEPEDNFASEIQTNAPEVHLNYENSDYTEDHIDLLDHHFCDLSEISKFNHQHSGKPDHPSLVSNASLAPFIVEGNGIKNGLLHYNMETAETDESYTDLDDTFARLKNLSQRHTNHSTDHHDDTVDSHLLHSFVSAENANEPTNDVDDNSLQEQVADASQFVSFLETTKTVATSNLRSTKRKLSEILENGQSGDCSLTDTNVDFDISEKQASGNSRSMIPLRKKR.

It is found in the cytoplasm. The protein resides in the nucleus. This is an uncharacterized protein from Schizosaccharomyces pombe (strain 972 / ATCC 24843) (Fission yeast).